A 934-amino-acid polypeptide reads, in one-letter code: Serine/threonine-protein kinase KIPK1 (934 aa).

6 disordered regions span residues Leu-20–Val-40, Arg-70–Gly-113, Pro-189–Gln-227, Ser-305–Gln-343, Ser-395–Val-438, and Glu-466–Arg-493. 2 stretches are compositionally biased toward polar residues: residues Ser-82–Ser-94 and Asn-212–Gln-227. Polar residues predominate over residues Ser-395–Asn-421. The Protein kinase domain occupies Phe-538–Phe-879. Residues Leu-544–Val-552 and Lys-567 contribute to the ATP site. The active-site Proton acceptor is Asp-663. The interval Ser-738–Glu-773 is disordered. Residues Lys-755–Leu-764 are compositionally biased toward polar residues.

This sequence belongs to the protein kinase superfamily. Ser/Thr protein kinase family. In terms of assembly, interacts with KCBP. Interacts with PERK8, PERK9, PERK10 and PERK13. In terms of processing, autophosphorylated. As to expression, expressed in roots, cauline leaves, flowers and siliques.

The protein localises to the cytoplasm. It localises to the nucleus. It catalyses the reaction L-seryl-[protein] + ATP = O-phospho-L-seryl-[protein] + ADP + H(+). It carries out the reaction L-threonyl-[protein] + ATP = O-phospho-L-threonyl-[protein] + ADP + H(+). Functionally, could be involved in the negative regulation of root growth. In Arabidopsis thaliana (Mouse-ear cress), this protein is Serine/threonine-protein kinase KIPK1.